Reading from the N-terminus, the 207-residue chain is Thymidylate kinase (207 aa).

9–16 contacts ATP; it reads GGEGCGKS.

It belongs to the thymidylate kinase family.

It carries out the reaction dTMP + ATP = dTDP + ADP. Functionally, phosphorylation of dTMP to form dTDP in both de novo and salvage pathways of dTTP synthesis. The chain is Thymidylate kinase from Dehalococcoides mccartyi (strain ATCC BAA-2266 / KCTC 15142 / 195) (Dehalococcoides ethenogenes (strain 195)).